The chain runs to 243 residues: uncharacterized protein (243 aa).

A compositionally biased stretch (low complexity) spans 1–18 (MSNSHYNNYQQQQPHSSN). The tract at residues 1–30 (MSNSHYNNYQQQQPHSSNGDPEYQHQQMVH) is disordered. In terms of domain architecture, AMMECR1 spans 38 to 232 (GHGMKTVAVP…MHYKEYREYQ (195 aa)).

This is an uncharacterized protein from Drosophila melanogaster (Fruit fly).